The following is a 329-amino-acid chain: DNA-directed RNA polymerase subunit alpha (329 aa).

The tract at residues 1–234 (MQGSVTEFLK…EQLDAFVELR (234 aa)) is alpha N-terminal domain (alpha-NTD). Residues 248–329 (FDPILLRPVD…WPPASLADDL (82 aa)) are alpha C-terminal domain (alpha-CTD).

This sequence belongs to the RNA polymerase alpha chain family. Homodimer. The RNAP catalytic core consists of 2 alpha, 1 beta, 1 beta' and 1 omega subunit. When a sigma factor is associated with the core the holoenzyme is formed, which can initiate transcription.

It carries out the reaction RNA(n) + a ribonucleoside 5'-triphosphate = RNA(n+1) + diphosphate. DNA-dependent RNA polymerase catalyzes the transcription of DNA into RNA using the four ribonucleoside triphosphates as substrates. This chain is DNA-directed RNA polymerase subunit alpha, found in Shewanella sp. (strain ANA-3).